We begin with the raw amino-acid sequence, 182 residues long: NADH-quinone oxidoreductase subunit 9 (182 aa).

2 4Fe-4S ferredoxin-type domains span residues 43–73 (LTRH…VEPA) and 89–118 (KVYE…LGYD). Residues Cys-53, Cys-56, Ser-57, Cys-59, Cys-63, Cys-98, Ile-99, Cys-101, Cys-104, and Cys-108 each coordinate [4Fe-4S] cluster.

The protein belongs to the complex I 23 kDa subunit family. In terms of assembly, NDH-1 is composed of 15 different subunits, Nqo1 to Nqo15. The complex has a L-shaped structure, with the hydrophobic arm (subunits Nqo7, Nqo8 and Nqo10 to Nqo14) embedded in the membrane and the hydrophilic peripheral arm (subunits Nqo1 to Nqo6, Nqo9 and Nqo15) protruding into the bacterial cytoplasm. The hydrophilic domain contains all the redox centers. [4Fe-4S] cluster serves as cofactor.

It is found in the cell membrane. It carries out the reaction a quinone + NADH + 5 H(+)(in) = a quinol + NAD(+) + 4 H(+)(out). NDH-1 shuttles electrons from NADH, via FMN and iron-sulfur (Fe-S) centers, to quinones in the respiratory chain. The immediate electron acceptor for the enzyme in this species is menaquinone. Couples the redox reaction to proton translocation (for every two electrons transferred, four hydrogen ions are translocated across the cytoplasmic membrane), and thus conserves the redox energy in a proton gradient required for the synthesis of ATP. The role of the Nqo9 subunit appears to provide a 'connecting chain' of two clusters between cluster N5 and the terminal cluster N2, and to stabilize the structure of the complex by interacting with other subunits. The sequence is that of NADH-quinone oxidoreductase subunit 9 (nqo9) from Thermus thermophilus (strain ATCC 27634 / DSM 579 / HB8).